The following is a 208-amino-acid chain: Non-specific lipid transfer protein GPI-anchored 4 (208 aa).

The first 25 residues, M1–A25, serve as a signal peptide directing secretion. N27, N67, and N105 each carry an N-linked (GlcNAc...) asparagine glycan. 4 disulfide bridges follow: C48–C91, C58–C75, C76–C116, and C89–C125. Residues G136–G181 form a disordered region. Residue S179 is the site of GPI-anchor amidated serine attachment. The propeptide at S180–N208 is removed in mature form.

Belongs to the plant LTP family. As to expression, confined to the anthers and stamen of the inflorescence, especially in pollen.

Its subcellular location is the cell membrane. Its function is as follows. Lipid transfer protein involved in seed and ovule maturation and development, probably by regulating the fatty acids homeostasis during suberin and sporopollenin biosynthesis or deposition. This Arabidopsis thaliana (Mouse-ear cress) protein is Non-specific lipid transfer protein GPI-anchored 4.